A 382-amino-acid polypeptide reads, in one-letter code: S-adenosylmethionine synthase (382 aa).

H15 contributes to the ATP binding site. D17 lines the Mg(2+) pocket. E43 serves as a coordination point for K(+). E56 and Q99 together coordinate L-methionine. The interval Q99–R109 is flexible loop. ATP contacts are provided by residues D164–K166, R230–F231, D239, R245–K246, A262, and K266. L-methionine is bound at residue D239. K270 provides a ligand contact to L-methionine.

This sequence belongs to the AdoMet synthase family. In terms of assembly, homotetramer; dimer of dimers. It depends on Mg(2+) as a cofactor. K(+) is required as a cofactor.

Its subcellular location is the cytoplasm. The catalysed reaction is L-methionine + ATP + H2O = S-adenosyl-L-methionine + phosphate + diphosphate. It participates in amino-acid biosynthesis; S-adenosyl-L-methionine biosynthesis; S-adenosyl-L-methionine from L-methionine: step 1/1. Its function is as follows. Catalyzes the formation of S-adenosylmethionine (AdoMet) from methionine and ATP. The overall synthetic reaction is composed of two sequential steps, AdoMet formation and the subsequent tripolyphosphate hydrolysis which occurs prior to release of AdoMet from the enzyme. This chain is S-adenosylmethionine synthase, found in Psychromonas ingrahamii (strain DSM 17664 / CCUG 51855 / 37).